Consider the following 182-residue polypeptide: UPF0397 protein SAG1634 (182 aa).

A run of 5 helical transmembrane segments spans residues 9–29, 42–62, 74–94, 109–129, and 148–168; these read VVAT…VNIP, AVLA…TGFI, SPWW…GFFA, LLLF…VVAP, and FLSS…LLLA.

This sequence belongs to the UPF0397 family.

It localises to the cell membrane. The sequence is that of UPF0397 protein SAG1634 from Streptococcus agalactiae serotype V (strain ATCC BAA-611 / 2603 V/R).